The following is a 70-amino-acid chain: MKSQTFFLLFLVVLLLAISQSEAFIGAVAGLLSKIFGKRSMRDMDTMKYLYDPSLSAADLKTLQKLMENY.

An N-terminal signal peptide occupies residues 1–23 (MKSQTFFLLFLVVLLLAISQSEA). F36 carries the post-translational modification Phenylalanine amide. A propeptide spanning residues 40 to 70 (SMRDMDTMKYLYDPSLSAADLKTLQKLMENY) is cleaved from the precursor.

The protein belongs to the non-disulfide-bridged peptide (NDBP) superfamily. Short antimicrobial peptide (group 4) family. As to expression, expressed by the venom gland.

It is found in the secreted. Its subcellular location is the target cell membrane. Its function is as follows. Antibacterial peptide. The chain is Peptide BmKn1 from Olivierus martensii (Manchurian scorpion).